We begin with the raw amino-acid sequence, 847 residues long: Alpha-glucuronidase (847 aa).

An N-terminal signal peptide occupies residues 1 to 19 (MVIRSLLLLLLAAIVPVFA). N52, N238, N321, N353, N586, N692, N740, and N767 each carry an N-linked (GlcNAc...) asparagine glycan.

The protein belongs to the glycosyl hydrolase 67 family.

It localises to the secreted. The catalysed reaction is an alpha-D-glucuronoside + H2O = D-glucuronate + an alcohol. Its function is as follows. Releases 4-O-methylglucuronic acid from xylan. In Hypocrea jecorina (Trichoderma reesei), this protein is Alpha-glucuronidase.